The primary structure comprises 439 residues: Trigger factor (439 aa).

Residues 175–260 enclose the PPIase FKBP-type domain; it reads SDKLVIDYQN…VKSVYVMKGM (86 aa).

The protein belongs to the FKBP-type PPIase family. Tig subfamily.

It localises to the cytoplasm. It catalyses the reaction [protein]-peptidylproline (omega=180) = [protein]-peptidylproline (omega=0). Its function is as follows. Involved in protein export. Acts as a chaperone by maintaining the newly synthesized protein in an open conformation. Functions as a peptidyl-prolyl cis-trans isomerase. This Ehrlichia chaffeensis (strain ATCC CRL-10679 / Arkansas) protein is Trigger factor.